Reading from the N-terminus, the 225-residue chain is 2-C-methyl-D-erythritol 4-phosphate cytidylyltransferase (225 aa).

It belongs to the IspD/TarI cytidylyltransferase family. IspD subfamily.

The catalysed reaction is 2-C-methyl-D-erythritol 4-phosphate + CTP + H(+) = 4-CDP-2-C-methyl-D-erythritol + diphosphate. It participates in isoprenoid biosynthesis; isopentenyl diphosphate biosynthesis via DXP pathway; isopentenyl diphosphate from 1-deoxy-D-xylulose 5-phosphate: step 2/6. Functionally, catalyzes the formation of 4-diphosphocytidyl-2-C-methyl-D-erythritol from CTP and 2-C-methyl-D-erythritol 4-phosphate (MEP). The polypeptide is 2-C-methyl-D-erythritol 4-phosphate cytidylyltransferase (Haemophilus influenzae (strain 86-028NP)).